Consider the following 1253-residue polypeptide: Methionine synthase (1253 aa).

The Hcy-binding domain maps to 6 to 326 (QDEIEAILRK…DHIREIAEAV (321 aa)). Residues Cys-248, Cys-311, and Cys-312 each contribute to the Zn(2+) site. The region spanning 359–620 (FVNIGERCNV…IHKDLLQLCE (262 aa)) is the Pterin-binding domain. (6S)-5,6,7,8-tetrahydrofolate-binding positions include 370–372 (GSK), Asp-437, Asn-458, Asp-525, Asn-567, Arg-573, and Arg-579. In terms of domain architecture, B12-binding N-terminal spans 650–747 (QTDEWRNGSI…FMEKEREEAR (98 aa)). Residues Glu-697, 770-774 (GDVHD), His-773, Ser-818, Thr-822, and Ala-874 each bind methylcob(III)alamin. Positions 760–895 (QGTIVLATVK…DENLKDDYFE (136 aa)) constitute a B12-binding domain. One can recognise an AdoMet activation domain in the interval 911–1253 (SLKERKYLPL…LGPILGYDTD (343 aa)). S-adenosyl-L-methionine contacts are provided by residues Asp-962, Arg-1160, and 1215-1216 (YF). Thr-1252 carries the phosphothreonine modification.

It belongs to the vitamin-B12 dependent methionine synthase family. As to quaternary structure, monomer. Dimer. Forms a multiprotein complex with MMACHC, MMADHC and MTRR. Methylcob(III)alamin serves as cofactor. Zn(2+) is required as a cofactor.

It localises to the cytoplasm. The enzyme catalyses (6S)-5-methyl-5,6,7,8-tetrahydrofolate + L-homocysteine = (6S)-5,6,7,8-tetrahydrofolate + L-methionine. It participates in amino-acid biosynthesis; L-methionine biosynthesis via de novo pathway; L-methionine from L-homocysteine (MetH route): step 1/1. Catalyzes the transfer of a methyl group from methylcob(III)alamin (MeCbl) to homocysteine, yielding enzyme-bound cob(I)alamin and methionine in the cytosol. MeCbl is an active form of cobalamin (vitamin B12) used as a cofactor for methionine biosynthesis. Cob(I)alamin form is regenerated to MeCbl by a transfer of a methyl group from 5-methyltetrahydrofolate. The processing of cobalamin in the cytosol occurs in a multiprotein complex composed of at least MMACHC, MMADHC, MTRR (methionine synthase reductase) and MTR which may contribute to shuttle safely and efficiently cobalamin towards MTR in order to produce methionine. The sequence is that of Methionine synthase (Mtr) from Rattus norvegicus (Rat).